Reading from the N-terminus, the 368-residue chain is Glycine betaine monooxygenase reductase subunit (368 aa).

In terms of domain architecture, FAD-binding FR-type spans 16-119 (NGRHNVRCVK…HGPVGDFNVI (104 aa)). The 2Fe-2S ferredoxin-type domain maps to 284-368 (LQVEFSNSGK…TPKSHVAIEF (85 aa)). [2Fe-2S] cluster is bound by residues C318, C323, C326, and C356.

The protein in the N-terminal section; belongs to the FAD-binding oxidoreductase type 6 family. Monomer. The system is composed of an oxygenase subunit (BmoA) and a reductase subunit (BmoB). Maximal specific activity is obtained when the ratio of BmoA to BmoB is 5:1. FAD is required as a cofactor. The cofactor is [2Fe-2S] cluster.

It carries out the reaction glycine betaine + NADH + O2 + H(+) = N,N-dimethylglycine + formaldehyde + NAD(+) + H2O. Functionally, involved in degradation of glycine betaine. Part of a Rieske-type oxygenase system that catalyzes the conversion of glycine betaine (GB) to dimethylglycine (DMG). This subunit is the ferredoxin reductase component of the system. NADH is the preferred electron donor. In Chromohalobacter salexigens (strain ATCC BAA-138 / DSM 3043 / CIP 106854 / NCIMB 13768 / 1H11), this protein is Glycine betaine monooxygenase reductase subunit.